We begin with the raw amino-acid sequence, 407 residues long: MKSIILFVLSLVLILEKQAAVMGQKDGSKGQLPSGSSQFPHGQKGQHYFGQKDQQHTKSKGSFSIQHTYHVDINDHDQTRKSQQYDLNALHKVTKSKQHLDGSQQLLNYKQEGRDHDKSEGHFHMIVIHHKGGQAHCGTQNPSQDQGNSPSGKGLSSQYSNTEKRLWVHGLSKEQASASGAQKGRTQGGSQSSYVLQTEELVVNKQQLETKNSHQNKGHYQNVVDVREEHSGKLQTSLHPAHQDRLQHGPKDIFTTQDELLVYNKNQHQTKNLNQDQEHGQKAHKISYQSSRTEERQLNHGEKSVQKDVSKGSISIQTEEKIHGKSQNQVTIHSQDQEHGHKENKMSYQSSSTEERHLNCGEKGIQKGVSKGSISIQTEEQIHGKSQNXVRIPSQAQEYGRKENKIS.

A signal peptide spans 1–23; sequence MKSIILFVLSLVLILEKQAAVMG. Disordered stretches follow at residues 25–60, 133–158, 173–192, and 272–407; these read KDGS…TKSK, GQAH…LSSQ, KEQA…GSQS, and NLNQ…NKIS. Composition is skewed to polar residues over residues 31-40, 137-158, and 174-192; these read QLPSGSSQFP, CGTQ…LSSQ, and EQAS…GSQS. Over residues 292 to 310 the composition is skewed to basic and acidic residues; it reads RTEERQLNHGEKSVQKDVS. Residues 325-334 show a composition bias toward polar residues; sequence KSQNQVTIHS. The segment covering 335 to 345 has biased composition (basic and acidic residues); sequence QDQEHGHKENK. Over residues 372–397 the composition is skewed to polar residues; the sequence is GSISIQTEEQIHGKSQNXVRIPSQAQ.

It belongs to the semenogelin family. Interacts with SERPINA5.

Its subcellular location is the secreted. Participates in the formation of a gel matrix (sperm coagulum) entrapping the accessory gland secretions and ejaculated spermatozoa. This is Semenogelin-2 (SEMG2) from Pan troglodytes (Chimpanzee).